Reading from the N-terminus, the 115-residue chain is Double-headed protease inhibitor, submandibular gland (115 aa).

Kazal-like domains lie at 6-66 (IGRE…ACDI) and 67-115 (ECTE…HGEC). 6 disulfide bridges follow: Cys-12/Cys-46, Cys-24/Cys-43, Cys-32/Cys-64, Cys-68/Cys-97, Cys-75/Cys-94, and Cys-83/Cys-115.

It localises to the secreted. In terms of biological role, this inhibitor is composed of two homologous actively inhibiting halves: one which inhibits trypsin, the other which inhibits elastase. The polypeptide is Double-headed protease inhibitor, submandibular gland (Vulpes vulpes (Red fox)).